The sequence spans 176 residues: Dual-action ribosomal maturation protein DarP (176 aa).

The protein belongs to the DarP family.

It is found in the cytoplasm. In terms of biological role, member of a network of 50S ribosomal subunit biogenesis factors which assembles along the 30S-50S interface, preventing incorrect 23S rRNA structures from forming. Promotes peptidyl transferase center (PTC) maturation. In Haemophilus ducreyi (strain 35000HP / ATCC 700724), this protein is Dual-action ribosomal maturation protein DarP.